The sequence spans 265 residues: MKIAIAGASGRMGRMLIEAVLNDSDAQLVGALDRAGSPFLGQDAGAFLGKETGVKLTDDLDAVFAQADYLIDFTRPEGTIAHVAAALRHDVKLVIGTTGFTAEQKAELQAAAARIGIVFAANMSVGVNVTLKLLEFAAKHFSHGYDIEIIEAHHRHKVDAPSGTALMMGEAVAGALGRSLEDCAVYGRHGVTGERDPSTIGFAAVRGGDIVGDHTVLFAGIGERIEITHKSSSRVSYAQGALRAVRFLSARGAGLFDMQDVLGLR.

Residues 7–12 (GASGRM) and Asp-33 contribute to the NAD(+) site. Arg-34 contacts NADP(+). Residues 96-98 (GTT) and 120-123 (AANM) contribute to the NAD(+) site. His-153 functions as the Proton donor/acceptor in the catalytic mechanism. A (S)-2,3,4,5-tetrahydrodipicolinate-binding site is contributed by His-154. Lys-157 serves as the catalytic Proton donor. Position 163–164 (163–164 (GT)) interacts with (S)-2,3,4,5-tetrahydrodipicolinate.

It belongs to the DapB family.

It localises to the cytoplasm. The catalysed reaction is (S)-2,3,4,5-tetrahydrodipicolinate + NAD(+) + H2O = (2S,4S)-4-hydroxy-2,3,4,5-tetrahydrodipicolinate + NADH + H(+). It catalyses the reaction (S)-2,3,4,5-tetrahydrodipicolinate + NADP(+) + H2O = (2S,4S)-4-hydroxy-2,3,4,5-tetrahydrodipicolinate + NADPH + H(+). Its pathway is amino-acid biosynthesis; L-lysine biosynthesis via DAP pathway; (S)-tetrahydrodipicolinate from L-aspartate: step 4/4. In terms of biological role, catalyzes the conversion of 4-hydroxy-tetrahydrodipicolinate (HTPA) to tetrahydrodipicolinate. In Burkholderia ambifaria (strain MC40-6), this protein is 4-hydroxy-tetrahydrodipicolinate reductase.